The primary structure comprises 149 residues: Oocyte-expressed protein homolog (149 aa).

A disordered region spans residues 1–23 (MVDDAGTAESQRGKQTPADSLEQ). Over residues 8-18 (AESQRGKQTPA) the composition is skewed to polar residues. Positions 49-110 (PLVFYLEAWL…SVQNRVKSML (62 aa)) constitute a KH; atypical domain.

The protein belongs to the KHDC1 family. As to quaternary structure, component of the subcortical maternal complex (SCMC), at least composed of NLRP5, KHDC3, OOEP, and TLE6. Within the complex, interacts with NLRP5, KHDC3 and TLE6. As part of the SCMC interacts with the SCMC-associated protein NLRP4F. The SCMC may facilitate translocation of its components between the nuclear and cytoplasmic compartments. Forms a scaffold complex with KHDC3/FILIA, and interacts with BLM and TRIM25 at DNA replication forks.

The protein resides in the cytoplasm. It is found in the nucleus. Component of the subcortical maternal complex (SCMC), a multiprotein complex that plays a key role in early embryonic development. The SCMC complex is a structural constituent of cytoplasmic lattices, which consist in fibrous structures found in the cytoplasm of oocytes and preimplantation embryos. They are required to store maternal proteins critical for embryonic development, such as proteins that control epigenetic reprogramming of the preimplantation embryo, and prevent their degradation or activation. As part of the OOEP-KHDC3 scaffold, recruits BLM and TRIM25 to DNA replication forks, thereby promoting the ubiquitination of BLM by TRIM25, enhancing BLM retainment at replication forks and therefore promoting stalled replication fork restart. Positively regulates the homologous recombination-mediated DNA double-strand break (DSB) repair pathway by regulating ATM activation and RAD51 recruitment to DSBs in oocytes. Thereby contributes to oocyte survival and the resumption and completion of meiosis. This is Oocyte-expressed protein homolog (OOEP) from Papio anubis (Olive baboon).